The following is a 660-amino-acid chain: DNA mismatch repair protein MutL (660 aa).

The segment covering 341-355 (SFQSDGAPPTQQLSS) has biased composition (polar residues). 2 disordered regions span residues 341 to 362 (SFQS…EKAE) and 378 to 398 (ALSP…RVER). A compositionally biased stretch (basic and acidic residues) spans 385–398 (ELPKSPERSERVER).

Belongs to the DNA mismatch repair MutL/HexB family.

Its function is as follows. This protein is involved in the repair of mismatches in DNA. It is required for dam-dependent methyl-directed DNA mismatch repair. May act as a 'molecular matchmaker', a protein that promotes the formation of a stable complex between two or more DNA-binding proteins in an ATP-dependent manner without itself being part of a final effector complex. The polypeptide is DNA mismatch repair protein MutL (Heliobacterium modesticaldum (strain ATCC 51547 / Ice1)).